Consider the following 195-residue polypeptide: Pyruvoyl-dependent arginine decarboxylase AaxB (195 aa).

At serine 53 the chain carries Pyruvic acid (Ser).

This sequence belongs to the pyruvoyl-dependent arginine decarboxylase family. Trimer of an alpha-beta dimer. Pyruvate is required as a cofactor.

It is found in the cytoplasm. It catalyses the reaction L-arginine + H(+) = agmatine + CO2. Its function is as follows. Part of the AaxABC system, catalyzes the decarboxylation of L-arginine. The arginine uptake by the bacterium in the macrophage may be a virulence factor against the host innate immune response. This is Pyruvoyl-dependent arginine decarboxylase AaxB (aaxB) from Chlamydia caviae (strain ATCC VR-813 / DSM 19441 / 03DC25 / GPIC) (Chlamydophila caviae).